Consider the following 319-residue polypeptide: Selection and upkeep of intraepithelial T-cells protein 9 (319 aa).

Positions 1-26 (MESSASCLPGFFMSFLLLQNTVLTQA) are cleaved as a signal peptide. In terms of domain architecture, Ig-like V-type spans 27–117 (MRSDIKINIQ…TNQEKKRSIV (91 aa)). The Extracellular portion of the chain corresponds to 27–139 (MRSDIKINIQ…LMSNKFSCPS (113 aa)). The cysteines at positions 47 and 101 are disulfide-linked. An N-linked (GlcNAc...) asparagine glycan is attached at Asn-105. Residues 140 to 160 (IYLITIIFLNFLRGILVFCCL) traverse the membrane as a helical segment. The Cytoplasmic segment spans residues 161–183 (RRKPVCFRNLMSTVMEALYSKMG). Residues 184 to 204 (VCCLLIWECLLLVLYIAFLPI) traverse the membrane as a helical segment. Residues 205-228 (YVSFRSRAFLLDDTYPLYTNWLWN) are Extracellular-facing. Residues 229 to 249 (ICIILTVIMVLFPGLILCLLW) form a helical membrane-spanning segment. Residues 250 to 319 (TLNCYGQVSS…DDTASTLFIS (70 aa)) lie on the Cytoplasmic side of the membrane.

This sequence belongs to the SKINT family. Expressed in skin, thymus and testis.

It is found in the membrane. Its function is as follows. May act by engaging a cell surface molecule on immature T-cells in the embryonic thymus. The sequence is that of Selection and upkeep of intraepithelial T-cells protein 9 (Skint9) from Mus musculus (Mouse).